The chain runs to 367 residues: rRNA processing protein RCL1 (367 aa).

Residue S2 is modified to N-acetylserine.

The protein belongs to the RNA 3'-terminal cyclase family. Type 2 subfamily. In terms of assembly, interacts directly with BMS1 and the U3 snoRNA to form a stable subcomplex. Component of the 90S small subunit processome also known as 90S pre-ribosome that consists of the 35S pre-rRNA, early-associating ribosomal proteins most of which are part of the small ribosomal subunit, the U3 snoRNA and associated proteins.

It localises to the nucleus. Its subcellular location is the nucleolus. Its function is as follows. Does not have cyclase activity. Plays a role in 40S-ribosomal-subunit biogenesis in the early pre-rRNA processing steps at sites A0, A1 and A2 that are required for proper maturation of the 18S RNA. RCL1 activates BMS1 by promoting GDP/GTP exchange. In Saccharomyces cerevisiae (strain ATCC 204508 / S288c) (Baker's yeast), this protein is rRNA processing protein RCL1 (RCL1).